We begin with the raw amino-acid sequence, 447 residues long: Phosphoglucosamine mutase (447 aa).

The Phosphoserine intermediate role is filled by Ser102. Mg(2+)-binding residues include Ser102, Asp241, Asp243, and Asp245. Residue Ser102 is modified to Phosphoserine.

It belongs to the phosphohexose mutase family. Requires Mg(2+) as cofactor. Post-translationally, activated by phosphorylation.

The enzyme catalyses alpha-D-glucosamine 1-phosphate = D-glucosamine 6-phosphate. Functionally, catalyzes the conversion of glucosamine-6-phosphate to glucosamine-1-phosphate. This is Phosphoglucosamine mutase from Pseudomonas syringae pv. tomato (strain ATCC BAA-871 / DC3000).